The chain runs to 250 residues: Triosephosphate isomerase (250 aa).

Residue 9-11 (NWK) coordinates substrate. Residue His-94 is the Electrophile of the active site. The active-site Proton acceptor is the Glu-166. Residues Gly-172, Ser-212, and 233 to 234 (GG) contribute to the substrate site.

It belongs to the triosephosphate isomerase family. As to quaternary structure, homodimer.

It is found in the cytoplasm. It catalyses the reaction D-glyceraldehyde 3-phosphate = dihydroxyacetone phosphate. Its pathway is carbohydrate biosynthesis; gluconeogenesis. It functions in the pathway carbohydrate degradation; glycolysis; D-glyceraldehyde 3-phosphate from glycerone phosphate: step 1/1. Functionally, involved in the gluconeogenesis. Catalyzes stereospecifically the conversion of dihydroxyacetone phosphate (DHAP) to D-glyceraldehyde-3-phosphate (G3P). In Clostridium novyi (strain NT), this protein is Triosephosphate isomerase.